The following is a 258-amino-acid chain: Glucosamine-6-phosphate deaminase (258 aa).

D65 functions as the Proton acceptor; for enolization step in the catalytic mechanism. D134 (for ring-opening step) is an active-site residue. H136 functions as the Proton acceptor; for ring-opening step in the catalytic mechanism. The active-site For ring-opening step is the E141.

This sequence belongs to the glucosamine/galactosamine-6-phosphate isomerase family. NagB subfamily.

It carries out the reaction alpha-D-glucosamine 6-phosphate + H2O = beta-D-fructose 6-phosphate + NH4(+). It participates in amino-sugar metabolism; N-acetylneuraminate degradation; D-fructose 6-phosphate from N-acetylneuraminate: step 5/5. In terms of biological role, catalyzes the reversible isomerization-deamination of glucosamine 6-phosphate (GlcN6P) to form fructose 6-phosphate (Fru6P) and ammonium ion. This is Glucosamine-6-phosphate deaminase from Corynebacterium kroppenstedtii (strain DSM 44385 / JCM 11950 / CIP 105744 / CCUG 35717).